Consider the following 138-residue polypeptide: uncharacterized protein (138 aa).

This is an uncharacterized protein from Acanthamoeba polyphaga (Amoeba).